Consider the following 102-residue polypeptide: RNA-binding protein Hfq (102 aa).

The region spanning 9–68 (DPFLNALRRERVPVSIYLVNGIKLQGQIESFDQFVILLKNTVSQMVYKHAISTVVPSRPV) is the Sm domain. The tract at residues 63 to 102 (VPSRPVSHHSNNAGGGTSSNYHHGSSAQNTSAQQDSEETE) is disordered. Polar residues predominate over residues 70–96 (HHSNNAGGGTSSNYHHGSSAQNTSAQQ).

This sequence belongs to the Hfq family. In terms of assembly, homohexamer.

Functionally, RNA chaperone that binds small regulatory RNA (sRNAs) and mRNAs to facilitate mRNA translational regulation in response to envelope stress, environmental stress and changes in metabolite concentrations. Also binds with high specificity to tRNAs. The polypeptide is RNA-binding protein Hfq (Escherichia fergusonii (strain ATCC 35469 / DSM 13698 / CCUG 18766 / IAM 14443 / JCM 21226 / LMG 7866 / NBRC 102419 / NCTC 12128 / CDC 0568-73)).